Consider the following 500-residue polypeptide: Lysine--tRNA ligase (500 aa).

Mg(2+) contacts are provided by glutamate 410 and glutamate 417.

This sequence belongs to the class-II aminoacyl-tRNA synthetase family. In terms of assembly, homodimer. Mg(2+) is required as a cofactor.

It is found in the cytoplasm. It carries out the reaction tRNA(Lys) + L-lysine + ATP = L-lysyl-tRNA(Lys) + AMP + diphosphate. The chain is Lysine--tRNA ligase from Shewanella baltica (strain OS155 / ATCC BAA-1091).